We begin with the raw amino-acid sequence, 167 residues long: Peptide deformylase (167 aa).

Residues cysteine 91 and histidine 133 each coordinate Fe cation. Glutamate 134 is a catalytic residue. A Fe cation-binding site is contributed by histidine 137.

Belongs to the polypeptide deformylase family. Fe(2+) serves as cofactor.

The enzyme catalyses N-terminal N-formyl-L-methionyl-[peptide] + H2O = N-terminal L-methionyl-[peptide] + formate. Functionally, removes the formyl group from the N-terminal Met of newly synthesized proteins. Requires at least a dipeptide for an efficient rate of reaction. N-terminal L-methionine is a prerequisite for activity but the enzyme has broad specificity at other positions. In Neisseria gonorrhoeae (strain ATCC 700825 / FA 1090), this protein is Peptide deformylase.